Here is a 168-residue protein sequence, read N- to C-terminus: Peptide deformylase 1 (168 aa).

2 residues coordinate Fe cation: C91 and H133. E134 is an active-site residue. Residue H137 coordinates Fe cation.

The protein belongs to the polypeptide deformylase family. Fe(2+) serves as cofactor.

It catalyses the reaction N-terminal N-formyl-L-methionyl-[peptide] + H2O = N-terminal L-methionyl-[peptide] + formate. Its function is as follows. Removes the formyl group from the N-terminal Met of newly synthesized proteins. Requires at least a dipeptide for an efficient rate of reaction. N-terminal L-methionine is a prerequisite for activity but the enzyme has broad specificity at other positions. The protein is Peptide deformylase 1 of Vibrio vulnificus (strain YJ016).